A 179-amino-acid polypeptide reads, in one-letter code: Fas apoptotic inhibitory molecule 1 (179 aa).

Threonine 2 carries the N-acetylthreonine modification.

Belongs to the FAIM1 family. In terms of tissue distribution, widely expressed, with the highest levels in brain, thymus, kidney, and spleen.

It localises to the cytoplasm. Plays a role as an inducible effector molecule that mediates Fas resistance produced by surface Ig engagement in B cells. In Mus musculus (Mouse), this protein is Fas apoptotic inhibitory molecule 1 (Faim).